Here is a 577-residue protein sequence, read N- to C-terminus: Sulfite reductase [NADPH] hemoprotein beta-component (577 aa).

Residues cysteine 436, cysteine 442, cysteine 481, and cysteine 485 each contribute to the [4Fe-4S] cluster site. Cysteine 485 serves as a coordination point for siroheme.

It belongs to the nitrite and sulfite reductase 4Fe-4S domain family. Alpha(8)-beta(8). The alpha component is a flavoprotein, the beta component is a hemoprotein. Siroheme serves as cofactor. The cofactor is [4Fe-4S] cluster.

The catalysed reaction is hydrogen sulfide + 3 NADP(+) + 3 H2O = sulfite + 3 NADPH + 4 H(+). It functions in the pathway sulfur metabolism; hydrogen sulfide biosynthesis; hydrogen sulfide from sulfite (NADPH route): step 1/1. Functionally, component of the sulfite reductase complex that catalyzes the 6-electron reduction of sulfite to sulfide. This is one of several activities required for the biosynthesis of L-cysteine from sulfate. This is Sulfite reductase [NADPH] hemoprotein beta-component from Shewanella woodyi (strain ATCC 51908 / MS32).